A 396-amino-acid chain; its full sequence is Ribosomal RNA large subunit methyltransferase I (396 aa).

Positions 2 to 79 (AIRIKLKPGR…REEEIDREFF (78 aa)) constitute a PUA domain.

It belongs to the methyltransferase superfamily. RlmI family.

It is found in the cytoplasm. It catalyses the reaction cytidine(1962) in 23S rRNA + S-adenosyl-L-methionine = 5-methylcytidine(1962) in 23S rRNA + S-adenosyl-L-homocysteine + H(+). Specifically methylates the cytosine at position 1962 (m5C1962) of 23S rRNA. This chain is Ribosomal RNA large subunit methyltransferase I, found in Shewanella oneidensis (strain ATCC 700550 / JCM 31522 / CIP 106686 / LMG 19005 / NCIMB 14063 / MR-1).